We begin with the raw amino-acid sequence, 729 residues long: Fatty acid oxidation complex subunit alpha (729 aa).

Residues 1 to 189 are enoyl-CoA hydratase/isomerase; the sequence is MLYQSETLQL…KIGLVDAVVD (189 aa). Position 296 (Asp296) interacts with substrate. Residues 311–729 are 3-hydroxyacyl-CoA dehydrogenase; sequence AAPKLAAVLG…LLDVSTNQPA (419 aa). NAD(+)-binding positions include Met324, Asp343, 400–402, Lys407, and Ser429; that span reads VVE. His450 acts as the For 3-hydroxyacyl-CoA dehydrogenase activity in catalysis. Residue Asn453 coordinates NAD(+). Asn500 and Tyr660 together coordinate substrate.

The protein in the N-terminal section; belongs to the enoyl-CoA hydratase/isomerase family. This sequence in the C-terminal section; belongs to the 3-hydroxyacyl-CoA dehydrogenase family. Heterotetramer of two alpha chains (FadB) and two beta chains (FadA).

It catalyses the reaction a (3S)-3-hydroxyacyl-CoA + NAD(+) = a 3-oxoacyl-CoA + NADH + H(+). The catalysed reaction is a (3S)-3-hydroxyacyl-CoA = a (2E)-enoyl-CoA + H2O. The enzyme catalyses a 4-saturated-(3S)-3-hydroxyacyl-CoA = a (3E)-enoyl-CoA + H2O. It carries out the reaction (3S)-3-hydroxybutanoyl-CoA = (3R)-3-hydroxybutanoyl-CoA. It catalyses the reaction a (3Z)-enoyl-CoA = a 4-saturated (2E)-enoyl-CoA. The catalysed reaction is a (3E)-enoyl-CoA = a 4-saturated (2E)-enoyl-CoA. It participates in lipid metabolism; fatty acid beta-oxidation. In terms of biological role, involved in the aerobic and anaerobic degradation of long-chain fatty acids via beta-oxidation cycle. Catalyzes the formation of 3-oxoacyl-CoA from enoyl-CoA via L-3-hydroxyacyl-CoA. It can also use D-3-hydroxyacyl-CoA and cis-3-enoyl-CoA as substrate. The chain is Fatty acid oxidation complex subunit alpha from Yersinia pseudotuberculosis serotype IB (strain PB1/+).